A 190-amino-acid chain; its full sequence is Probable RNA-binding protein 18 (190 aa).

An RRM domain is found at 25 to 106 (HRLWIGNLDP…KKLVVRWAHA (82 aa)). The segment at 166–190 (VYSYFKPPDKKRTTPYSRTAWKSRR) is disordered.

The sequence is that of Probable RNA-binding protein 18 (Rbm18) from Mus musculus (Mouse).